Reading from the N-terminus, the 537-residue chain is Hydroxylamine reductase (537 aa).

[4Fe-4S] cluster contacts are provided by Cys-3, Cys-6, Cys-15, and Cys-21. His-239, Glu-263, Cys-307, Cys-393, Cys-421, Cys-446, Glu-480, and Lys-482 together coordinate hybrid [4Fe-2O-2S] cluster. Cys-393 is subject to Cysteine persulfide.

Belongs to the HCP family. It depends on [4Fe-4S] cluster as a cofactor. Requires hybrid [4Fe-2O-2S] cluster as cofactor.

The protein resides in the cytoplasm. It carries out the reaction A + NH4(+) + H2O = hydroxylamine + AH2 + H(+). Functionally, catalyzes the reduction of hydroxylamine to form NH(3) and H(2)O. This is Hydroxylamine reductase from Lawsonia intracellularis (strain PHE/MN1-00).